The chain runs to 1282 residues: Cytokine receptor (1282 aa).

An N-terminal signal peptide occupies residues 1–23; sequence MVAQEQLVLLLMLLAGCRGGANA. Residues 24–889 are Extracellular-facing; that stretch reads ILDPGWVIPS…CTPDTHSVKA (866 aa). N-linked (GlcNAc...) asparagine glycosylation is found at Asn44, Asn86, Asn87, and Asn114. A disulfide bond links Cys47 and Cys106. Fibronectin type-III domains are found at residues 124–220, 227–327, 329–431, 436–535, 537–631, 635–735, and 736–836; these read PLLV…NHFE, PGQN…TAPA, PRRP…SNRD, EPRN…KKDD, AKME…TGEA, QPRE…TAIG, and VPSP…LMST. Cysteines 132 and 142 form a disulfide. Residues Asn143 and Asn156 are each glycosylated (N-linked (GlcNAc...) asparagine). Cys173 and Cys183 are disulfide-bonded. Residues Asn184, Asn230, Asn235, Asn278, Asn298, Asn310, Asn376, Asn448, and Asn466 are each glycosylated (N-linked (GlcNAc...) asparagine). Cys472 and Cys482 are disulfide-bonded. Asn568, Asn581, Asn626, Asn676, Asn703, Asn777, Asn790, and Asn862 each carry an N-linked (GlcNAc...) asparagine glycan. A helical transmembrane segment spans residues 890-910; the sequence is MYQTIEVTVAILVLGVIFYLV. Over 911–1282 the chain is Cytoplasmic; sequence YKKYRKMSDI…NAMAHNRHVL (372 aa). Ser976 carries the phosphoserine modification. 2 disordered regions span residues 989–1092 and 1238–1258; these read TASS…HTFS and TVGS…QHSR. Composition is skewed to basic and acidic residues over residues 999-1009 and 1033-1064; these read VDRDGYDDNHE and NDRE…DREQ.

The protein belongs to the type I cytokine receptor family. In terms of assembly, interacts with wdp; the interaction promotes internalization of dome and its subsequent lysosomal degradation; thereby reducing JAK/STAT signaling. Post-translationally, undergoes lysosomal degradation. In terms of tissue distribution, in stage 11 embryos, tracheal pits show highest expression, at stage 14 high expression is detected in the posterior spiracles, gut and head.

The protein resides in the apicolateral cell membrane. Its function is as follows. Critical for epithelial morphogenesis during oogenesis; border cell migration. Required in the germarium for the polarization of follicle cells during encapsulation of germline cells. Required for embryonic segmentation and trachea specification. Essential receptor molecule for upd and JAK/STAT signaling during oogenesis. The protein is Cytokine receptor (dome) of Drosophila melanogaster (Fruit fly).